The sequence spans 195 residues: Thioredoxin reductase-like selenoprotein T (195 aa).

A signal peptide spans 1 to 19 (MRLLLLLLVAASAVVRSDA). A cross-link (cysteinyl-selenocysteine (Cys-Sec)) is located at residues 46–49 (CVSU). A non-standard amino acid (selenocysteine) is located at residue U49. Residues 85–103 (IASFLSVFKLVLIGLIIVG) form a helical membrane-spanning segment.

It belongs to the SelWTH family. Selenoprotein T subfamily. May contain a selenide-sulfide bond between Cys-46 and Sec-49. This bond is speculated to serve as redox-active pair.

The protein resides in the endoplasmic reticulum membrane. The catalysed reaction is [thioredoxin]-dithiol + NADP(+) = [thioredoxin]-disulfide + NADPH + H(+). Its function is as follows. Selenoprotein with thioredoxin reductase-like oxidoreductase activity. Protects dopaminergic neurons against oxidative stress and cell death. Involved in ADCYAP1/PACAP-induced calcium mobilization and neuroendocrine secretion. Plays a role in fibroblast anchorage and redox regulation. In gastric smooth muscle, modulates the contraction processes through the regulation of calcium release and MYLK activation. In pancreatic islets, involved in the control of glucose homeostasis, contributes to prolonged ADCYAP1/PACAP-induced insulin secretion. The polypeptide is Thioredoxin reductase-like selenoprotein T (Bos taurus (Bovine)).